A 303-amino-acid polypeptide reads, in one-letter code: Porphobilinogen deaminase (303 aa).

C241 carries the S-(dipyrrolylmethanemethyl)cysteine modification.

This sequence belongs to the HMBS family. As to quaternary structure, monomer. The cofactor is dipyrromethane.

It carries out the reaction 4 porphobilinogen + H2O = hydroxymethylbilane + 4 NH4(+). Its pathway is porphyrin-containing compound metabolism; protoporphyrin-IX biosynthesis; coproporphyrinogen-III from 5-aminolevulinate: step 2/4. It participates in porphyrin-containing compound metabolism; chlorophyll biosynthesis. In terms of biological role, tetrapolymerization of the monopyrrole PBG into the hydroxymethylbilane pre-uroporphyrinogen in several discrete steps. The polypeptide is Porphobilinogen deaminase (Roseiflexus castenholzii (strain DSM 13941 / HLO8)).